A 404-amino-acid polypeptide reads, in one-letter code: Cysteine desulfurase IscS (404 aa).

Pyridoxal 5'-phosphate is bound by residues 75 to 76 (AT), N155, Q183, and 203 to 205 (SAH). K206 carries the N6-(pyridoxal phosphate)lysine modification. T243 is a pyridoxal 5'-phosphate binding site. Catalysis depends on C328, which acts as the Cysteine persulfide intermediate. Residue C328 coordinates [2Fe-2S] cluster.

This sequence belongs to the class-V pyridoxal-phosphate-dependent aminotransferase family. NifS/IscS subfamily. As to quaternary structure, homodimer. Forms a heterotetramer with IscU, interacts with other sulfur acceptors. Requires pyridoxal 5'-phosphate as cofactor.

It is found in the cytoplasm. It carries out the reaction (sulfur carrier)-H + L-cysteine = (sulfur carrier)-SH + L-alanine. The protein operates within cofactor biosynthesis; iron-sulfur cluster biosynthesis. Its function is as follows. Master enzyme that delivers sulfur to a number of partners involved in Fe-S cluster assembly, tRNA modification or cofactor biosynthesis. Catalyzes the removal of elemental sulfur atoms from cysteine to produce alanine. Functions as a sulfur delivery protein for Fe-S cluster synthesis onto IscU, an Fe-S scaffold assembly protein, as well as other S acceptor proteins. The sequence is that of Cysteine desulfurase IscS from Pseudomonas fluorescens (strain ATCC BAA-477 / NRRL B-23932 / Pf-5).